The chain runs to 370 residues: Actin-related protein 2/3 complex subunit 1A-A (370 aa).

6 WD repeats span residues 6–45, 50–89, 140–179, 202–241, 244–284, and 322–365; these read FLLEPISCHAWNKDLTQIAISPNNHEVHIYKKSGDQWVKG, EHNGHITGIDWAPKSDRIVTCGADRNAYVWSQKDGVWKPT, PIRSTVLSLDWHPNNVLLAAGSCDFKTRVFSAYIKEVDEK, SSGGWVHSVSFSASGNKLAWVSHDSTVSVADASKNMSVSQ, TEFL…TFVS, and LHQN…SYIQ.

It belongs to the WD repeat ARPC1 family. As to quaternary structure, component of the Arp2/3 complex.

Its subcellular location is the cytoplasm. The protein localises to the cytoskeleton. It is found in the nucleus. Probably functions as a component of the Arp2/3 complex which is involved in regulation of actin polymerization and together with an activating nucleation-promoting factor (NPF) mediates the formation of branched actin networks. In addition to its role in the cytoplasmic cytoskeleton, the Arp2/3 complex also promotes actin polymerization in the nucleus, thereby regulating gene transcription and repair of damaged DNA. This chain is Actin-related protein 2/3 complex subunit 1A-A (arpc1a-a), found in Xenopus laevis (African clawed frog).